Consider the following 321-residue polypeptide: MTSKLDQLRAMTTVVADTGDIEAVARLKPVDCTTNPTIVLKALGTPMFADAIKEAVAWGKKQGGTPDAVAAAVADRLAISVGAALSGLVPGRVSTEVDADLSFDTEASLAKARAIIAAYKERGIERDRILIKLASTWEGIRAAEVLQKEGIDCNLTLLFSKAQAVACADAKVFLISPFVGRILDWYKKSTGKDYTPEEDPGVLSVREIYNYYKANDIKTIVMGASFRSAAEVEALAGCDRLTISPNLLDELAKDEGKLERKLSPENKTSVAKIIVDEKTYRWQMNEDAMATEKLAEGIRAFAKDLGTLRAMVSKELQLAAA.

Lys-132 serves as the catalytic Schiff-base intermediate with substrate.

It belongs to the transaldolase family. Type 1 subfamily. Homodimer.

The protein localises to the cytoplasm. The catalysed reaction is D-sedoheptulose 7-phosphate + D-glyceraldehyde 3-phosphate = D-erythrose 4-phosphate + beta-D-fructose 6-phosphate. The protein operates within carbohydrate degradation; pentose phosphate pathway; D-glyceraldehyde 3-phosphate and beta-D-fructose 6-phosphate from D-ribose 5-phosphate and D-xylulose 5-phosphate (non-oxidative stage): step 2/3. Its function is as follows. Transaldolase is important for the balance of metabolites in the pentose-phosphate pathway. The chain is Transaldolase from Rhizobium rhizogenes (strain K84 / ATCC BAA-868) (Agrobacterium radiobacter).